The following is a 324-amino-acid chain: Beta-ketoacyl-[acyl-carrier-protein] synthase III (324 aa).

Residues cysteine 112 and histidine 249 contribute to the active site. Residues 250–254 form an ACP-binding region; the sequence is QANRR. Residue asparagine 279 is part of the active site.

It belongs to the thiolase-like superfamily. FabH family. Homodimer.

Its subcellular location is the cytoplasm. It catalyses the reaction malonyl-[ACP] + acetyl-CoA + H(+) = 3-oxobutanoyl-[ACP] + CO2 + CoA. The protein operates within lipid metabolism; fatty acid biosynthesis. Catalyzes the condensation reaction of fatty acid synthesis by the addition to an acyl acceptor of two carbons from malonyl-ACP. Catalyzes the first condensation reaction which initiates fatty acid synthesis and may therefore play a role in governing the total rate of fatty acid production. Possesses both acetoacetyl-ACP synthase and acetyl transacylase activities. Its substrate specificity determines the biosynthesis of branched-chain and/or straight-chain of fatty acids. The polypeptide is Beta-ketoacyl-[acyl-carrier-protein] synthase III (Streptococcus pyogenes serotype M49 (strain NZ131)).